The chain runs to 312 residues: 2,3-dihydroxyphenylpropionate/2,3-dihydroxicinnamic acid 1,2-dioxygenase 1 (312 aa).

Histidine 115 acts as the Proton donor in catalysis. The active-site Proton acceptor is histidine 179.

Belongs to the LigB/MhpB extradiol dioxygenase family. In terms of assembly, homotetramer. It depends on Fe(2+) as a cofactor.

The enzyme catalyses 3-(2,3-dihydroxyphenyl)propanoate + O2 = (2Z,4E)-2-hydroxy-6-oxonona-2,4-dienedioate + H(+). The catalysed reaction is (2E)-3-(2,3-dihydroxyphenyl)prop-2-enoate + O2 = (2Z,4E,7E)-2-hydroxy-6-oxonona-2,4,7-trienedioate + H(+). Its pathway is aromatic compound metabolism; 3-phenylpropanoate degradation. Catalyzes the non-heme iron(II)-dependent oxidative cleavage of 2,3-dihydroxyphenylpropionic acid and 2,3-dihydroxicinnamic acid into 2-hydroxy-6-ketononadienedioate and 2-hydroxy-6-ketononatrienedioate, respectively. In Dechloromonas aromatica (strain RCB), this protein is 2,3-dihydroxyphenylpropionate/2,3-dihydroxicinnamic acid 1,2-dioxygenase 1.